The following is a 289-amino-acid chain: Glycerol facilitator-aquaporin gla (289 aa).

Transmembrane regions (helical) follow at residues 10–30 (ITEF…VANV) and 41–61 (SWMI…VAFG). Positions 68 to 70 (NPA) match the NPA 1 motif. The next 3 membrane-spanning stretches (helical) occupy residues 87 to 107 (AQYI…IVMV), 151 to 171 (FLGS…FFGS), and 209 to 229 (MIAH…LGGP). Residues 235–237 (NPA) carry the NPA 2 motif. The helical transmembrane segment at 264–284 (WYAWVPVLAPILASLAAVALF) threads the bilayer.

The protein belongs to the MIP/aquaporin (TC 1.A.8) family.

The protein resides in the cell membrane. Mixed channel protein that transports both water and glycerol. This Lactococcus lactis subsp. cremoris (Streptococcus cremoris) protein is Glycerol facilitator-aquaporin gla (gla).